Reading from the N-terminus, the 380-residue chain is SAM and SH3 domain-containing protein 3 (380 aa).

Disordered regions lie at residues 1-76 (MLRR…GKKW) and 96-168 (LSEE…SPAP). The span at 22–41 (LQRSSSFKDFAKSKPSSPVV) shows a compositional bias: low complexity. Phosphoserine occurs at positions 27, 34, and 42. Threonine 61 carries the phosphothreonine modification. Serine 97 carries the post-translational modification Phosphoserine. Threonine 103 bears the Phosphothreonine mark. Serine 110 is subject to Phosphoserine. Threonine 112 is modified (phosphothreonine). 2 positions are modified to phosphoserine: serine 113 and serine 120. Residues 141–150 (LSRQTSTGSE) show a composition bias toward polar residues. An SH3 domain is found at 173-234 (PFCGRARVHT…KFIYVDVLPE (62 aa)). Residues 252 to 316 (PKPKTLHELL…LTAAELLLDY (65 aa)) form the SAM domain. Position 318 is a phosphothreonine (threonine 318). Residues 318-327 (TGSEEAEEGA) show a composition bias toward acidic residues. A disordered region spans residues 318-380 (TGSEEAEEGA…LQGLSLSGAP (63 aa)). Serine 320 bears the Phosphoserine mark. Over residues 369-380 (EQLQGLSLSGAP) the composition is skewed to polar residues.

As to expression, preferentially expressed in lymphoid tissues. Expressed in bone marrow, thymus, spleen, lymph nodes and Peyer patches of gut. In the spleen and lymph nodes, expressed in both T- and B-cells. In the thymus, in the medulla and cortex.

In terms of biological role, may function as a signaling adapter protein in lymphocytes. The polypeptide is SAM and SH3 domain-containing protein 3 (Sash3) (Mus musculus (Mouse)).